The following is a 50-amino-acid chain: Protein PsbN (50 aa).

The helical transmembrane segment at 14–34 threads the bilayer; sequence VAVTILAVLLALTGFGLWTAF.

It belongs to the PsbN family.

The protein resides in the cellular thylakoid membrane. May play a role in photosystem I and II biogenesis. This is Protein PsbN from Prochlorococcus marinus (strain MIT 9515).